We begin with the raw amino-acid sequence, 1430 residues long: MRLTNEKATMQPQLSDLALVLGLLICCLPTLTWAATLSDKRLCADPKCEQIISMGIAKITYAIGGEGLISFKINSPIRVLSKSAGSNMQLWGVDINGRRGYANKDFIMEKKILVRDKDLLYEVPVVGPGSPVQSVETPVQSVETTVQPVLNASESTDDLATTTTSPLEIAVDSIVVEHDKLQDQQVPDPTAASKAQVQVIEGTELPLEAIAATTEGSIVPETAADPQEATNLDSTVVDTKEPQALNSEAIKLQEEPKAQQPATEAEKPPPLPQAINAELEDADDFDYGDDETDDDSQQGSQDNESIVEIANDNKSINESIELKPLSVAQLKKTDKVEDSKDETKEKHAEMEVSKQEDSSLPTETLNVTALEEQIDQKEFPKQVLDAAVELKSSDPLPVEEVTETVAEPPRTIVEDKINEEIVPVSAKIQAKPATVNPTEPIVAQSDAEIKAPSESVISSTTPAPVVEEAPQKADPVGLPPLFEKKNFENPNNYYKQLQEEQEKQRLVAEAEEQKRLQEEADQQKRLQEEAALNKRLLEEAEQQKRLQEEAEQQKRLQEEAELNKRLLEEAEKQKRLHEESEQLQRSSEEAEPQLSVQEANMQQLNDSVDSQSNEIVDNNNRQQPEQYQQHHHHTESAFNHPSTASHTTPTPDAESPYAAVQEETTEASQTDNHREGVGYVEPVALPATASPVSEVPIKEDAAGFGLFATIVDTVNNFIGKDPQSDPADSSDELHRILYPGRPEVPPSQRKAEDFAPADVDGYCARFQAKDEHCHRSISLDNFVEVMADKLVDHSQLLLCVVIAAISSLFFMFAYYCFCNSSQEGALLSKLNHLERSLLASHKENLIIKHDLMTTRTKLASIEDNSFGSNDMVADLKKQLESELYEKAKLQEQVGSLERDLDNAAEAGLELNKMLSEVLNGQNGDEAFMSTVDELQRQLNDQEKIIIEINNSLAEKSRENSELQYTFTEATTRLNSELKTLQEDNYELEMEKSKLQTRLQEIQAETESELAKALEARNYEMQKLQNQIVELTVKWEREHGDLQTSLAKIEALEDCLKAVGKDAIHNVQELITSAKTRGELNAVHKKLVELQSKVEQEEAHKQRLESQLQQSSQDVEQLKQDFNQSERDKLEAQTRLEVLSGYFREKENDLKKELSLQETKWLQHQGENASTVETQTLMKNEIQTLKSQNDELRAEIEAQIASHKAQMGTLENRAHESWLAARQSERRCEEALAEAASLRRKLTTMASGGGGVGGDPGVMEAIAANGTSVLGAELKTAPSPLPLPGSPLLNMPNPLPFLAAPFSPFMGLPPPFLPPTGAGGARPPPLGRMRSPPPSSRGDRDRERYSDYSDYDDYDDDEEDDRGMDRRRRHSGSWGRRHRGSYSHSPRTYRSLSPSDSRYNYNDTETDFSPPPSPPPVPSGRSATSRPYSEV.

An N-terminal signal peptide occupies residues methionine 1 to alanine 34. Residues alanine 35 to leucine 796 are Extracellular-facing. The SH3 domain occupies glutamine 50 to isoleucine 112. Disordered stretches follow at residues glutamine 253–proline 272, aspartate 284–asparagine 303, glutamate 318–threonine 362, serine 445–lysine 524, and glutamate 568–histidine 673. The segment covering aspartate 284–serine 296 has biased composition (acidic residues). Basic and acidic residues-rich tracts occupy residues lysine 331–aspartate 357, leucine 497–lysine 524, and glutamate 568–glutamate 588. A coiled-coil region spans residues tyrosine 494 to asparagine 620. The segment covering leucine 594 to arginine 621 has biased composition (polar residues). The segment covering histidine 640–proline 651 has biased composition (low complexity). The chain crosses the membrane as a helical span at residues leucine 797–phenylalanine 817. Residues cysteine 818 to valine 1430 lie on the Cytoplasmic side of the membrane. 2 positions are modified to phosphoserine: serine 865 and serine 868. Positions asparagine 869–alanine 1245 form a coiled coil. Residues serine 1105–valine 1114 are compositionally biased toward low complexity. Disordered stretches follow at residues serine 1105–arginine 1126 and leucine 1312–valine 1430. Residues glutamate 1115–arginine 1126 are compositionally biased toward basic and acidic residues. A compositionally biased stretch (pro residues) spans arginine 1321 to serine 1334. A compositionally biased stretch (basic and acidic residues) spans arginine 1336 to aspartate 1346. Phosphoserine is present on residues serine 1345 and serine 1348. Residues serine 1348–arginine 1361 show a composition bias toward acidic residues. The segment covering aspartate 1364–serine 1380 has biased composition (basic residues). Residues threonine 1387–aspartate 1402 are compositionally biased toward polar residues. Residues serine 1390 and serine 1392 each carry the phosphoserine modification. A compositionally biased stretch (pro residues) spans serine 1408–proline 1417. Residues arginine 1420–valine 1430 are compositionally biased toward polar residues.

The protein belongs to the MIA/OTOR family. Tango1 subfamily.

It is found in the golgi apparatus membrane. Its subcellular location is the golgi apparatus. It localises to the trans-Golgi network. Its function is as follows. Required for protein secretion. May participate in cargo loading by binding to COPII coat subunits and guiding SH3-bound proteins into a growing carrier. At basal transitional ER sites in follicle epithelial cells, mediates the exit of basal membrane protein such as vkg, LanB1 and Trol, from the endoplasmic reticulum (ER) to basal Golgi clusters. This Drosophila melanogaster (Fruit fly) protein is Transport and Golgi organization protein 1.